A 123-amino-acid polypeptide reads, in one-letter code: Large ribosomal subunit protein eL8 (123 aa).

It belongs to the eukaryotic ribosomal protein eL8 family. In terms of assembly, part of the 50S ribosomal subunit. Probably part of the RNase P complex.

It localises to the cytoplasm. Multifunctional RNA-binding protein that recognizes the K-turn motif in ribosomal RNA, the RNA component of RNase P, box H/ACA, box C/D and box C'/D' sRNAs. The sequence is that of Large ribosomal subunit protein eL8 from Methanosphaera stadtmanae (strain ATCC 43021 / DSM 3091 / JCM 11832 / MCB-3).